The primary structure comprises 184 residues: Protein GrpE (184 aa).

The segment covering 1–10 (MSQETEKDLE) has biased composition (basic and acidic residues). The interval 1–38 (MSQETEKDLEQTQNEELVEEAQSDEKKDQEVDPVEAAQ) is disordered.

It belongs to the GrpE family. In terms of assembly, homodimer.

The protein resides in the cytoplasm. Functionally, participates actively in the response to hyperosmotic and heat shock by preventing the aggregation of stress-denatured proteins, in association with DnaK and GrpE. It is the nucleotide exchange factor for DnaK and may function as a thermosensor. Unfolded proteins bind initially to DnaJ; upon interaction with the DnaJ-bound protein, DnaK hydrolyzes its bound ATP, resulting in the formation of a stable complex. GrpE releases ADP from DnaK; ATP binding to DnaK triggers the release of the substrate protein, thus completing the reaction cycle. Several rounds of ATP-dependent interactions between DnaJ, DnaK and GrpE are required for fully efficient folding. The polypeptide is Protein GrpE (Sulfurovum sp. (strain NBC37-1)).